Reading from the N-terminus, the 606-residue chain is MSQLSSTLKRYTESARFTDAPFTKSSYGTYTPSSYGTNLAASFLEKEKFGFKPSPPTSYLTRPRTYGPPSILDYDRGRPLLRPDVIGGGKRAESQTRGTERPSGSGLSGGSGFSYGVTTSSVSYLPVSARDQGVTLTQKKSNSQSDLARDFSSLQTSDSYRLDSGNLGRSPMLARTRKELCALQGLYQAASRSEYLADYLENYGRKASAPQVPTPTPPSRAPEVLSPTYRPSGRYSLWEKGKGQALVSSRSSSPGRDTMNSKSAQGLAGLRNLGNTCFMNSILQCLSNTRELRDYCLQRLYLRDLSHSSRAHTALMEEFAKLIQTIWTSSPNDVVSPSEFKTQIQRYAPRFVGYNQQDAQEFLRFLLDGLHNEVNRVIARPKSNTENLDHLPDDEKGRQMWRKYLEREDSRIGDLFVGQLKSSLTCTDCGYCSTVFDPFWDLSLPITKRGYPEVTLMDCMRLFTKEDVLDGDEKPTCCRCRARKRCIKKFSIQRFPKILVLHLKRFSESRIRTSKLTAFVNFPLRDLDLREFASENTNHAVYNLYAVSNHSGTTMGGHYTAYCRSPVTGEWHTFNDSSVSPMSSSQVRTSDAYLLFYELASPPSRM.

The segment at 1–201 (MSQLSSTLKR…RSEYLADYLE (201 aa)) is necessary for interaction with MDM4. 2 disordered regions span residues 53 to 112 (PSPP…GGSG) and 207 to 228 (ASAP…LSPT). Positions 90-100 (KRAESQTRGTE) are enriched in basic and acidic residues. One can recognise a USP domain in the interval 268 to 600 (AGLRNLGNTC…DAYLLFYELA (333 aa)). The Nucleophile role is filled by cysteine 277. Residues 404-504 (YLEREDSRIG…FPKILVLHLK (101 aa)) are necessary for interaction with MDM4. 4 residues coordinate Zn(2+): cysteine 426, cysteine 429, cysteine 477, and cysteine 480. Histidine 558 functions as the Proton acceptor in the catalytic mechanism.

Belongs to the peptidase C19 family. USP2 subfamily. As to quaternary structure, homooligomer. Found in trimeric complex with MDM2 and MDM4 and USP2. Interacts with CCND1; the interaction is direct and promotes its stabilization by antagonizing ubiquitin-dependent degradation. Interacts (via N-terminus and C-terminus) with MDM2. Interacts with MDM4 and PER1. Interacts with KCNQ1; counteracts the NEDD4L-specific down-regulation of I(Ks) and restores plasma membrane localization of KCNQ1.

It localises to the cytoplasm. It is found in the perinuclear region. It carries out the reaction Thiol-dependent hydrolysis of ester, thioester, amide, peptide and isopeptide bonds formed by the C-terminal Gly of ubiquitin (a 76-residue protein attached to proteins as an intracellular targeting signal).. Its activity is regulated as follows. Cleavage is inhibited by ubiquitin in a dosage-dependent manner. Cleavage is blocked by ubiquitin aldehyde. Hydrolase that deubiquitinates polyubiquitinated target proteins such as MDM2, MDM4 and CCND1. Possesses both ubiquitin-specific peptidase and isopeptidase activities. Deubiquitinates MDM2 without reversing MDM2-mediated p53/TP53 ubiquitination and thus indirectly promotes p53/TP53 degradation and limits p53 activity. Has no deubiquitinase activity against p53/TP53. Prevents MDM2-mediated degradation of MDM4. Plays a role in the G1/S cell-cycle progression in normal and cancer cells. Plays a role in the regulation of myogenic differentiation of embryonic muscle cells. Regulates the circadian clock by modulating its intrinsic circadian rhythm and its capacity to respond to external cues. Associates with clock proteins and deubiquitinates core clock component PER1 but does not affect its overall stability. Regulates the nucleocytoplasmic shuttling and nuclear retention of PER1 and its repressive role on the clock transcription factors CLOCK and BMAL1. This chain is Ubiquitin carboxyl-terminal hydrolase 2 (USP2), found in Bos taurus (Bovine).